The chain runs to 429 residues: Glucose-1-phosphate adenylyltransferase (429 aa).

Residues Gly-162, 177–178 (EK), and Ser-209 contribute to the alpha-D-glucose 1-phosphate site.

The protein belongs to the bacterial/plant glucose-1-phosphate adenylyltransferase family. In terms of assembly, homotetramer.

The enzyme catalyses alpha-D-glucose 1-phosphate + ATP + H(+) = ADP-alpha-D-glucose + diphosphate. Its pathway is glycan biosynthesis; glycogen biosynthesis. Involved in the biosynthesis of ADP-glucose, a building block required for the elongation reactions to produce glycogen. Catalyzes the reaction between ATP and alpha-D-glucose 1-phosphate (G1P) to produce pyrophosphate and ADP-Glc. The polypeptide is Glucose-1-phosphate adenylyltransferase (Cyanothece sp. (strain PCC 7425 / ATCC 29141)).